A 607-amino-acid polypeptide reads, in one-letter code: Fatty acid amide hydrolase (607 aa).

Active-site charge relay system residues include Lys204 and Ser280. 301–304 contributes to the substrate binding site; it reads GGGS. Catalysis depends on Ser304, which acts as the Acyl-ester intermediate.

It belongs to the amidase family. Forms homodimers.

The protein localises to the endoplasmic reticulum membrane. It is found in the cell membrane. The catalysed reaction is N-(9Z,12Z-octadecadienoyl)-ethanolamine + H2O = ethanolamine + (9Z,12Z)-octadecadienoate. Catalyzes the hydrolysis of bioactive endogenous fatty acid amides to their corresponding acids. The hydrolysis of endogenous amidated lipids terminates their participation as lipid mediators in various signaling systems. Converts a wide range of N-acylethanolamines (NAEs) to their corresponding free fatty acids and ethanolamine. The sequence is that of Fatty acid amide hydrolase from Medicago truncatula (Barrel medic).